A 116-amino-acid chain; its full sequence is NADPH-dependent 7-cyano-7-deazaguanine reductase (116 aa).

Cysteine 31 acts as the Thioimide intermediate in catalysis. Residue aspartate 38 is the Proton donor of the active site. Residues valine 53–leucine 55 and tyrosine 72–glutamate 73 contribute to the substrate site.

The protein belongs to the GTP cyclohydrolase I family. QueF type 1 subfamily.

It is found in the cytoplasm. The enzyme catalyses 7-aminomethyl-7-carbaguanine + 2 NADP(+) = 7-cyano-7-deazaguanine + 2 NADPH + 3 H(+). The protein operates within tRNA modification; tRNA-queuosine biosynthesis. Functionally, catalyzes the NADPH-dependent reduction of 7-cyano-7-deazaguanine (preQ0) to 7-aminomethyl-7-deazaguanine (preQ1). This chain is NADPH-dependent 7-cyano-7-deazaguanine reductase, found in Chlorobium phaeobacteroides (strain DSM 266 / SMG 266 / 2430).